The primary structure comprises 405 residues: CLIP domain-containing serine protease B8 (405 aa).

The N-terminal stretch at 1–24 (MSSAVLLLLVCGCALAVLSPVAYG) is a signal peptide. 3 cysteine pairs are disulfide-bonded: Cys-41–Cys-94, Cys-52–Cys-84, and Cys-58–Cys-95. In terms of domain architecture, Clip spans 41 to 95 (CDIPNEPNPGQCMLPAECVAYGKINDVSSLSSIERFSFIKQIQCNGSDTVPYVCC). Residues Asn-85 and Asn-108 are each glycosylated (N-linked (GlcNAc...) asparagine). A Peptidase S1 domain is found at 137 to 404 (IRGGQLAEID…YLPWIKMYTG (268 aa)). The cysteines at positions 167 and 183 are disulfide-linked. Residues His-182 and Asp-249 each act as charge relay system in the active site. 2 cysteine pairs are disulfide-bonded: Cys-322–Cys-339 and Cys-349–Cys-380. Residue Ser-353 is the Charge relay system of the active site.

It belongs to the peptidase S1 family. CLIP subfamily. Post-translationally, proteolytic cleavage is necessary for activation. Cleaved and activated by CLIPB4.

Its subcellular location is the secreted. Functionally, serine protease that functions in the melanization-mediated immune response. Preferentially, cleaves substrates with an arginine at the P1 site. May be involved in the activation of the prophenoloxidase cascade upstream of CLIPB9; does not cleave prophenoloxidase. This is CLIP domain-containing serine protease B8 from Anopheles gambiae (African malaria mosquito).